A 549-amino-acid polypeptide reads, in one-letter code: GATA-type transcription factor sreA (549 aa).

The interval Ala40–Ser100 is disordered. Composition is skewed to basic and acidic residues over residues Gly43 to Glu72 and His86 to Lys97. A GATA-type 1 zinc finger spans residues Cys106–Cys130. The tract at residues Arg141 to Glu174 is disordered. The tract at residues Cys180 to Cys198 is cystein-rich region (CRR). The tract at residues Gly223 to Glu244 is disordered. A GATA-type 2 zinc finger spans residues Cys251–Cys275. Disordered regions lie at residues Arg306–Leu332, Asn375–Ser459, and Leu482–Gln535. The segment covering Ser309–Thr331 has biased composition (low complexity). Over residues His383–Pro396 the composition is skewed to pro residues. Residues Gln485–Pro497 show a composition bias toward low complexity. The segment covering Leu498–Asp515 has biased composition (polar residues). Residues Val511 to Gln549 adopt a coiled-coil conformation. A compositionally biased stretch (basic and acidic residues) spans Asn516–Gln535.

The protein resides in the nucleus. Functionally, GATA-type transcription repressor that regulates iron- acquisition genes through specific binding GATA sequence elements of target promoters. Iron acquisition regulation is critical for survival under both iron-limiting conditions (to acquire essential iron) and iron-replete conditions (to limit iron toxicity). SreA targets include genes encoding a number of key iron-regulated factors such as those involved in siderophore biosynthesis. The polypeptide is GATA-type transcription factor sreA (Emericella nidulans (strain FGSC A4 / ATCC 38163 / CBS 112.46 / NRRL 194 / M139) (Aspergillus nidulans)).